The following is a 474-amino-acid chain: Trehalose-6-phosphate synthase (474 aa).

Position 10 (R10) interacts with D-glucose 6-phosphate. 22-23 serves as a coordination point for UDP-alpha-D-glucose; the sequence is GG. Positions 77 and 131 each coordinate D-glucose 6-phosphate. Positions 263 and 268 each coordinate UDP-alpha-D-glucose. R301 provides a ligand contact to D-glucose 6-phosphate. Residues F340 and 366–370 each bind UDP-alpha-D-glucose; that span reads LVAKE.

Belongs to the glycosyltransferase 20 family. As to quaternary structure, homotetramer.

It catalyses the reaction D-glucose 6-phosphate + UDP-alpha-D-glucose = alpha,alpha-trehalose 6-phosphate + UDP + H(+). Its pathway is glycan biosynthesis; trehalose biosynthesis. Its function is as follows. Probably involved in the osmoprotection via the biosynthesis of trehalose. Catalyzes the transfer of glucose from UDP-alpha-D-glucose (UDP-Glc) to D-glucose 6-phosphate (Glc-6-P) to form trehalose-6-phosphate. Acts with retention of the anomeric configuration of the UDP-sugar donor. The protein is Trehalose-6-phosphate synthase of Shigella dysenteriae serotype 1 (strain Sd197).